The primary structure comprises 313 residues: Catalase-related peroxidase (313 aa).

His28 is an active-site residue. Tyr294 provides a ligand contact to heme.

Belongs to the catalase family. As to quaternary structure, monomer. Heme serves as cofactor.

Functionally, has an organic peroxide-dependent peroxidase activity. Exhibits strong peroxidase activity using organic hydroperoxides as cosubstrates, weak peroxidase activity using hydrogen peroxide and negligible catalase activity. May have a role in elimination of reactive oxygen species, in particular by deactivating hydroperoxides. This chain is Catalase-related peroxidase, found in Mycolicibacterium paratuberculosis (strain ATCC BAA-968 / K-10) (Mycobacterium paratuberculosis).